We begin with the raw amino-acid sequence, 427 residues long: Protein TIFY 6a (427 aa).

A compositionally biased stretch (basic and acidic residues) spans 1-25 (MERDFLGAIWRKEEAAGKPEEHSDY). 2 disordered regions span residues 1–32 (MERDFLGAIWRKEEAAGKPEEHSDYRGGGGGA) and 128–154 (YGVAAPHHFPSPSPSPRHPVPFGHANP). The span at 136-146 (FPSPSPSPRHP) shows a compositional bias: pro residues. Residues 196 to 231 (QNPKVTQMTIFYDGLVNVFDNIPVEKAQELMLLASR) form the Tify domain. The tract at residues 296-327 (SFSSSNDSAGPKSGGLPLAVTPLSQASPSQPI) is disordered. Residues 317–327 (PLSQASPSQPI) are compositionally biased toward polar residues. Positions 343–367 (PQARKASLARFLEKRKERVSSVAPY) match the Jas motif. A Nuclear localization signal motif is present at residues 345 to 352 (ARKASLAR). Residues 361 to 427 (VSSVAPYPSS…QEPPSTKLQI (67 aa)) form a disordered region. Polar residues-rich tracts occupy residues 369-402 (SSKSPLESSDTIGSPSTPSKSSCTDITPSTNNCE) and 411-427 (RNISFSSQEPPSTKLQI).

It belongs to the TIFY/JAZ family. In terms of assembly, interacts with COI1A. Interacts with COI1A and COI1B in a coronatine-dependent manner. Coronatine is an analog of jasmonoyl isoleucine (JA-Ile). Ubiquitinated. Targeted for degradation by the SCF(COI1) E3 ubiquitin ligase-proteasome pathway during jasmonate signaling.

Its subcellular location is the nucleus. Its function is as follows. Repressor of jasmonate responses. The chain is Protein TIFY 6a from Oryza sativa subsp. japonica (Rice).